The primary structure comprises 278 residues: HTH-type transcriptional activator RhaS (278 aa).

One can recognise an HTH araC/xylS-type domain in the interval 174-272; it reads NQLMAWLEDH…NWSPRDIRQG (99 aa). 2 DNA-binding regions (H-T-H motif) span residues 191–212 and 239–262; these read EAVA…KQHT and VTEI…RREF.

As to quaternary structure, binds DNA as a dimer.

The protein localises to the cytoplasm. Functionally, activates expression of the rhaBAD and rhaT operons. The chain is HTH-type transcriptional activator RhaS from Salmonella dublin (strain CT_02021853).